Consider the following 309-residue polypeptide: HPr kinase/phosphorylase (309 aa).

Catalysis depends on residues H138 and K159. Residue 153–160 coordinates ATP; sequence GQSGVGKS. S160 contacts Mg(2+). The active-site Proton acceptor; for phosphorylation activity. Proton donor; for dephosphorylation activity is the D177. The important for the catalytic mechanism of both phosphorylation and dephosphorylation stretch occupies residues 201 to 210; it reads LEIRGLGIIN. Residue E202 participates in Mg(2+) binding. Residue R243 is part of the active site. Residues 264–269 form an important for the catalytic mechanism of dephosphorylation region; the sequence is PVRPGR.

This sequence belongs to the HPrK/P family. As to quaternary structure, homohexamer. It depends on Mg(2+) as a cofactor.

It catalyses the reaction [HPr protein]-L-serine + ATP = [HPr protein]-O-phospho-L-serine + ADP + H(+). The catalysed reaction is [HPr protein]-O-phospho-L-serine + phosphate + H(+) = [HPr protein]-L-serine + diphosphate. In terms of biological role, catalyzes the ATP- as well as the pyrophosphate-dependent phosphorylation of a specific serine residue in HPr, a phosphocarrier protein of the phosphoenolpyruvate-dependent sugar phosphotransferase system (PTS). HprK/P also catalyzes the pyrophosphate-producing, inorganic phosphate-dependent dephosphorylation (phosphorolysis) of seryl-phosphorylated HPr (P-Ser-HPr). The two antagonistic activities of HprK/P are regulated by several intracellular metabolites, which change their concentration in response to the absence or presence of rapidly metabolisable carbon sources (glucose, fructose, etc.) in the growth medium. Also phosphorylates/dephosphorylates the HPr-like catabolite repression protein crh on a specific serine residue. Therefore, by controlling the phosphorylation state of HPr and crh, HPrK/P is a sensor enzyme that plays a major role in the regulation of carbon metabolism and sugar transport: it mediates carbon catabolite repression (CCR), and regulates PTS-catalyzed carbohydrate uptake and inducer exclusion. This Bacillus cytotoxicus (strain DSM 22905 / CIP 110041 / 391-98 / NVH 391-98) protein is HPr kinase/phosphorylase.